The sequence spans 355 residues: Cyclic nucleotide-gated potassium channel RHE_CH03180 (355 aa).

The Cytoplasmic portion of the chain corresponds to 1-12; sequence MSAVPFSKISTP. The chain crosses the membrane as a helical span at residues 13 to 30; sequence LNALFATIGLLVVAALTT. Topologically, residues 31-38 are periplasmic; the sequence is QGLTGQER. Residues 39 to 61 traverse the membrane as a helical segment; it reads LVFELLLAAIWLAYVLQLSGTLL. The Cytoplasmic segment spans residues 62-73; the sequence is SRRRRLSGEMTA. A helical membrane pass occupies residues 74–93; the sequence is LVIDLLAVLVPAAAFLFVGS. Residues 94 to 111 form a helical membrane-spanning segment; it reads RDRDLYCAIWLLKPLRDS. The Cytoplasmic portion of the chain corresponds to 112 to 128; sequence TFFRLLAKVVANESRNL. Residues 129–149 traverse the membrane as a helical segment; the sequence is LGVTSVFGIVLFGAALAGYII. Residues 150-160 lie on the Periplasmic side of the membrane; sequence ERDVQPDKFGS. The pore-forming intramembrane region spans 161–179; the sequence is IPQAMWWAVVTLSTTGYGD. The short motif at 174–179 is the Selectivity filter element; it reads TTGYGD. At 180–184 the chain is on the periplasmic side; it reads EIPQS. The chain crosses the membrane as a helical span at residues 185 to 209; sequence LAGRVLAGLVMMSGIGIFALWAGIL. The Cytoplasmic segment spans residues 210–355; sequence ATGFYEEVRR…LERRGGPPKE (146 aa). Residues 297 to 298, 307 to 308, and arginine 348 contribute to the 3',5'-cyclic AMP site; these read GE and RS.

This sequence belongs to the potassium channel family. In terms of assembly, homotetramer.

It localises to the cell membrane. Functionally, cyclic nucleotide-regulated potassium channel activated by cAMP. In Rhizobium etli (strain ATCC 51251 / DSM 11541 / JCM 21823 / NBRC 15573 / CFN 42), this protein is Cyclic nucleotide-gated potassium channel RHE_CH03180.